A 216-amino-acid chain; its full sequence is Large ribosomal subunit protein uL1y (216 aa).

This sequence belongs to the universal ribosomal protein uL1 family. Interacts with the GTPase NUG2.

The protein is Large ribosomal subunit protein uL1y (RPL10AB) of Arabidopsis thaliana (Mouse-ear cress).